The primary structure comprises 60 residues: Ixodegrin-like peptide (60 aa).

The first 19 residues, 1 to 19 (MNAVFIAALLILGTSTFDA), serve as a signal peptide directing secretion. A Cell attachment site motif is present at residues 49–51 (RGD).

Belongs to the ixodegrin family. In terms of processing, contains 3 disulfide bonds. In terms of tissue distribution, expressed in salivary glands.

It is found in the secreted. Its function is as follows. Tick salivary platelet aggregation inhibitor that plays an important part in the anti-hemostatic strategy of ticks. Inhibits platelet aggregation induced by ADP, thrombin and thromboxane A2 (TXA2). Blocks platelet adhesion to soluble collagen (most probably through the binding to alpha-2/beta-1 integrin (ITGA2/ITGB1)) and binds to purified glycoprotein IIb/IIIa (ITGA2B/ITGB3) in a dose-dependent manner. In vivo, reduces thrombus weight effectively in a rat arteriovenous shunt model and inhibits thrombosis in a carrageenan-induced mouse tail thrombosis model. This chain is Ixodegrin-like peptide, found in Ixodes scapularis (Black-legged tick).